Here is a 490-residue protein sequence, read N- to C-terminus: Sphingomyelinase (490 aa).

An N-terminal signal peptide occupies residues 1–31; the sequence is MDYAKRIGQVGALAVVLGVGAAVTTHAIGSA. A disordered region spans residues 30-49; the sequence is SAAPTDPSSSSTDSPVDACS. The Periplasmic segment spans residues 32–136; that stretch reads APTDPSSSST…FDACDPDGNR (105 aa). The chain crosses the membrane as a beta stranded span at residues 137–145; the sequence is MTFAVRERG. Residues 146-161 are Extracellular-facing; the sequence is APGGPQHGIVTVDQRT. The chain crosses the membrane as a beta stranded span at residues 162–168; the sequence is ASFIYTA. Over 169-171 the chain is Periplasmic; it reads DPG. A beta stranded membrane pass occupies residues 172 to 182; that stretch reads FVGTDTFSVNV. The Extracellular segment spans residues 183 to 187; that stretch reads SDDTS. Residues 188–196 form a beta stranded membrane-spanning segment; that stretch reads LHVHGLAGY. The Periplasmic segment spans residues 197 to 204; it reads LGPFHGHD. Residues 205–213 traverse the membrane as a beta stranded segment; the sequence is DVATVTVFV. Topologically, residues 214–490 are extracellular; the sequence is GNTPTDTISG…HYVADNVAVR (277 aa).

This sequence belongs to the SpmT family.

Its subcellular location is the cell outer membrane. It catalyses the reaction a sphingomyelin + H2O = phosphocholine + an N-acylsphing-4-enine + H(+). Functionally, catalyzes the cleavage of sphingomyelin, a major lipid in eukaryotic cells, into ceramide and phosphocholine, which are then utilized by M.bovis as carbon, nitrogen and phosphorus sources, respectively. Thus, enables M.bovis to utilize sphingomyelin as a source of several essential nutrients for intracellular growth during infection. Furthermore, lyses erythrocytes and constitutes a hemolytic factor. This Mycobacterium bovis (strain ATCC BAA-935 / AF2122/97) protein is Sphingomyelinase.